The following is a 197-amino-acid chain: Probable GTP-binding protein EngB (197 aa).

In terms of domain architecture, EngB-type G spans 22 to 194 (DLPEIAFAGR…LETIARMTGI (173 aa)). GTP-binding positions include 30–37 (GRSNVGKS), 57–61 (GKTRL), 75–78 (DLPG), 142–145 (TKAD), and 173–175 (FST). Mg(2+) contacts are provided by S37 and T59.

This sequence belongs to the TRAFAC class TrmE-Era-EngA-EngB-Septin-like GTPase superfamily. EngB GTPase family. The cofactor is Mg(2+).

Necessary for normal cell division and for the maintenance of normal septation. The sequence is that of Probable GTP-binding protein EngB from Desulfosudis oleivorans (strain DSM 6200 / JCM 39069 / Hxd3) (Desulfococcus oleovorans).